The sequence spans 126 residues: Holo-[acyl-carrier-protein] synthase (126 aa).

The Mg(2+) site is built by Asp9 and Glu58.

The protein belongs to the P-Pant transferase superfamily. AcpS family. Mg(2+) is required as a cofactor.

It is found in the cytoplasm. It catalyses the reaction apo-[ACP] + CoA = holo-[ACP] + adenosine 3',5'-bisphosphate + H(+). In terms of biological role, transfers the 4'-phosphopantetheine moiety from coenzyme A to a Ser of acyl-carrier-protein. This Salmonella newport (strain SL254) protein is Holo-[acyl-carrier-protein] synthase.